We begin with the raw amino-acid sequence, 343 residues long: Geranylgeranyl pyrophosphate synthase (343 aa).

Over residues Met1–Lys12 the composition is skewed to basic and acidic residues. The disordered stretch occupies residues Met1–Pro26. Residues Lys69, Arg72, and His101 each coordinate isopentenyl diphosphate. Mg(2+) contacts are provided by Asp108 and Asp112. A dimethylallyl diphosphate-binding site is contributed by Arg117. Arg118 lines the isopentenyl diphosphate pocket. Residues Thr196 and Gln229 each coordinate dimethylallyl diphosphate. Residue Asp232 coordinates Mg(2+). Asn236, Lys246, and Lys256 together coordinate dimethylallyl diphosphate.

It belongs to the FPP/GGPP synthase family. Requires Mg(2+) as cofactor.

It carries out the reaction isopentenyl diphosphate + dimethylallyl diphosphate = (2E)-geranyl diphosphate + diphosphate. The catalysed reaction is isopentenyl diphosphate + (2E)-geranyl diphosphate = (2E,6E)-farnesyl diphosphate + diphosphate. The enzyme catalyses isopentenyl diphosphate + (2E,6E)-farnesyl diphosphate = (2E,6E,10E)-geranylgeranyl diphosphate + diphosphate. The protein operates within mycotoxin biosynthesis. Geranylgeranyl pyrophosphate synthase; part of the gene cluster that mediates the biosynthesis of aphidicolin, a specific inhibitor of eukaryotic DNA synthesis and DNA polymerase alpha. The geranylgeranyl pyrophosphate synthase GGS is required for supplying a sufficient amount of geranylgeranyl diphosphate (GGDP), the general precursor of diterpenes. The diterpene synthase ACS then catalyzes the conversion of geranylgeranyl diphosphate to aphidicolan-16-beta-ol via the intermediate syn-copalyldiphosphate (syn-CDP). In addition to aphidicolan-16-beta-ol, the enzyme also produces low levels of amphidicol-15-ene and amphidicol-16-ene. The cytochrome P450 monooxygenase P450-2 then catalyzes the two-step hydroxylation from aphidicolan-16-beta-ol to 3-deoxyaphidicolin via a 17,3-deoxyaphidicolin intermediate. Finally, the cytochrome P450 monooxygenase P450-1 converts 3-deoxyaphidicolin to aphidicolin. In Neocamarosporium betae (Beet black rot fungus), this protein is Geranylgeranyl pyrophosphate synthase (GGS).